Reading from the N-terminus, the 462-residue chain is 3-isopropylmalate dehydratase large subunit (462 aa).

[4Fe-4S] cluster contacts are provided by cysteine 337, cysteine 397, and cysteine 400.

It belongs to the aconitase/IPM isomerase family. LeuC type 1 subfamily. Heterodimer of LeuC and LeuD. Requires [4Fe-4S] cluster as cofactor.

The catalysed reaction is (2R,3S)-3-isopropylmalate = (2S)-2-isopropylmalate. The protein operates within amino-acid biosynthesis; L-leucine biosynthesis; L-leucine from 3-methyl-2-oxobutanoate: step 2/4. In terms of biological role, catalyzes the isomerization between 2-isopropylmalate and 3-isopropylmalate, via the formation of 2-isopropylmaleate. The sequence is that of 3-isopropylmalate dehydratase large subunit from Listeria innocua serovar 6a (strain ATCC BAA-680 / CLIP 11262).